A 99-amino-acid polypeptide reads, in one-letter code: Cell division topological specificity factor (99 aa).

Belongs to the MinE family.

In terms of biological role, prevents the cell division inhibition by proteins MinC and MinD at internal division sites while permitting inhibition at polar sites. This ensures cell division at the proper site by restricting the formation of a division septum at the midpoint of the long axis of the cell. The sequence is that of Cell division topological specificity factor from Tolumonas auensis (strain DSM 9187 / NBRC 110442 / TA 4).